The following is a 93-amino-acid chain: Pyrimidine/purine nucleoside phosphorylase (93 aa).

It belongs to the nucleoside phosphorylase PpnP family.

The enzyme catalyses a purine D-ribonucleoside + phosphate = a purine nucleobase + alpha-D-ribose 1-phosphate. It catalyses the reaction adenosine + phosphate = alpha-D-ribose 1-phosphate + adenine. It carries out the reaction cytidine + phosphate = cytosine + alpha-D-ribose 1-phosphate. The catalysed reaction is guanosine + phosphate = alpha-D-ribose 1-phosphate + guanine. The enzyme catalyses inosine + phosphate = alpha-D-ribose 1-phosphate + hypoxanthine. It catalyses the reaction thymidine + phosphate = 2-deoxy-alpha-D-ribose 1-phosphate + thymine. It carries out the reaction uridine + phosphate = alpha-D-ribose 1-phosphate + uracil. The catalysed reaction is xanthosine + phosphate = alpha-D-ribose 1-phosphate + xanthine. Functionally, catalyzes the phosphorolysis of diverse nucleosides, yielding D-ribose 1-phosphate and the respective free bases. Can use uridine, adenosine, guanosine, cytidine, thymidine, inosine and xanthosine as substrates. Also catalyzes the reverse reactions. In Pseudomonas savastanoi pv. phaseolicola (strain 1448A / Race 6) (Pseudomonas syringae pv. phaseolicola (strain 1448A / Race 6)), this protein is Pyrimidine/purine nucleoside phosphorylase.